A 135-amino-acid polypeptide reads, in one-letter code: Sex-regulated protein janus-A (135 aa).

Lys-37 is a binding site for substrate. His-63 (proton acceptor) is an active-site residue. 104-106 (SQG) is a substrate binding site.

Belongs to the janus family.

Its function is as follows. JanA and janB regulate somatic sex differentiation. The protein is Sex-regulated protein janus-A (janA) of Drosophila simulans (Fruit fly).